The chain runs to 330 residues: Ferredoxin--NADP reductase (330 aa).

FAD is bound by residues Glu-35, Gln-43, Tyr-48, Val-90, Phe-123, Asp-285, and Thr-326.

The protein belongs to the ferredoxin--NADP reductase type 2 family. As to quaternary structure, homodimer. Requires FAD as cofactor.

It carries out the reaction 2 reduced [2Fe-2S]-[ferredoxin] + NADP(+) + H(+) = 2 oxidized [2Fe-2S]-[ferredoxin] + NADPH. The polypeptide is Ferredoxin--NADP reductase (Streptococcus agalactiae serotype Ia (strain ATCC 27591 / A909 / CDC SS700)).